Reading from the N-terminus, the 116-residue chain is NADH-ubiquinone oxidoreductase chain 3 (116 aa).

The next 3 helical transmembrane spans lie at 3–23 (LITT…TISF), 56–76 (FFLI…LLPL), and 87–107 (LTLI…IYEW).

The protein belongs to the complex I subunit 3 family.

The protein localises to the mitochondrion membrane. The enzyme catalyses a ubiquinone + NADH + 5 H(+)(in) = a ubiquinol + NAD(+) + 4 H(+)(out). In terms of biological role, core subunit of the mitochondrial membrane respiratory chain NADH dehydrogenase (Complex I) that is believed to belong to the minimal assembly required for catalysis. Complex I functions in the transfer of electrons from NADH to the respiratory chain. The immediate electron acceptor for the enzyme is believed to be ubiquinone. This is NADH-ubiquinone oxidoreductase chain 3 (MT-ND3) from Oncorhynchus tshawytscha (Chinook salmon).